We begin with the raw amino-acid sequence, 367 residues long: MRRVEGYDMIVLMMAVILTCFGVVMVYSASSVMAAKKFHDGFFFLKRQSLYALIGFIGMGVAMHVDYHVWKKWAVPLFLGTFFLLLLVFVPGIGGTAKGASRWIRLPGFNFQPSELAKVALIMYMAYSLEKRQDKLKQFMSGFFPYMLILGVFIAVLLAQHDMGAALTMLAVAIVMLFAAGTKVQYILGMGLVALPGICYLVFTKAYRMRRITAFLDPWQDPTDAGFQIIQSWLALGTGGFFGQGLGEGKQKLFYLPEAHTDFILSVLGEEMGFIGVVVIASMFLLLVQRSIRVAIAAEDSFGRFLAFGIAILLGLEAFVNMAVVTGLLPTKGIALPFLSYGGSSLIISLCSVGVLLNVSTRMRGAA.

Residues Met1–Asp8 are Cytoplasmic-facing. The helical transmembrane segment at Met9–Ala29 threads the bilayer. Over Ser30–Ser49 the chain is Periplasmic. Residues Leu50 to Trp70 traverse the membrane as a helical segment. Topologically, residues Lys71–Lys72 are cytoplasmic. A helical membrane pass occupies residues Trp73–Ile93. Residues Gly94–Gln138 are Periplasmic-facing. The helical transmembrane segment at Phe139–Ala159 threads the bilayer. The Cytoplasmic segment spans residues Gln160 to His161. A helical transmembrane segment spans residues Asp162–Thr182. Lys183 is a topological domain (periplasmic). The chain crosses the membrane as a helical span at residues Val184–Thr204. At Lys205–Ala225 the chain is on the cytoplasmic side. Residues Gly226 to Leu246 form a helical membrane-spanning segment. At Gly247–Ser266 the chain is on the periplasmic side. The helical transmembrane segment at Val267–Leu287 threads the bilayer. Over Val288 to Arg304 the chain is Cytoplasmic. Residues Phe305–Val325 form a helical membrane-spanning segment. Residues Thr326 to Ala335 are Periplasmic-facing. Residues Leu336–Leu356 form a helical membrane-spanning segment. The Cytoplasmic portion of the chain corresponds to Leu357–Ala367.

The protein belongs to the SEDS family. FtsW subfamily.

It localises to the cell inner membrane. It carries out the reaction [GlcNAc-(1-&gt;4)-Mur2Ac(oyl-L-Ala-gamma-D-Glu-L-Lys-D-Ala-D-Ala)](n)-di-trans,octa-cis-undecaprenyl diphosphate + beta-D-GlcNAc-(1-&gt;4)-Mur2Ac(oyl-L-Ala-gamma-D-Glu-L-Lys-D-Ala-D-Ala)-di-trans,octa-cis-undecaprenyl diphosphate = [GlcNAc-(1-&gt;4)-Mur2Ac(oyl-L-Ala-gamma-D-Glu-L-Lys-D-Ala-D-Ala)](n+1)-di-trans,octa-cis-undecaprenyl diphosphate + di-trans,octa-cis-undecaprenyl diphosphate + H(+). Its pathway is cell wall biogenesis; peptidoglycan biosynthesis. Peptidoglycan polymerase that is essential for cell division. This chain is Probable peptidoglycan glycosyltransferase FtsW, found in Geobacter sp. (strain M18).